Consider the following 1162-residue polypeptide: Transcription termination factor 2 (1162 aa).

The Zn(2+) site is built by Cys-6, His-9, Cys-32, and Cys-37. The GRF-type zinc finger occupies 6–46; sequence CPEHGTFCFLKTGVRDGPNKGKSFYVCRADTCSFVRATDIP. Disordered regions lie at residues 97-116, 142-358, 388-407, and 459-503; these read PDSKEHSVSNKSQHASETFH, IKGE…EEDD, DRSVQRKVSPASGVSKKVEP, and LSPE…TQPV. Over residues 105–116 the composition is skewed to polar residues; the sequence is SNKSQHASETFH. Over residues 142 to 178 the composition is skewed to basic and acidic residues; sequence IKGEGEEKKADKKQREKGDQLFDQKKEQKPEMMEKDL. Lys-143 participates in a covalent cross-link: Glycyl lysine isopeptide (Lys-Gly) (interchain with G-Cter in SUMO2). The segment covering 219 to 232 has biased composition (polar residues); that stretch reads IKSQQCQGNELTRP. Low complexity predominate over residues 233 to 245; it reads SASSQEKSSGKSQ. Over residues 246–258 the composition is skewed to basic and acidic residues; that stretch reads DVQRESEPLREKV. Over residues 261-274 the composition is skewed to polar residues; the sequence is LLPQNVHSHNSISK. Positions 323–338 are enriched in low complexity; the sequence is PAPGGPAAQAAPAAPG. Positions 459–485 are enriched in polar residues; it reads LSPEQGTNEKSNSQVPQQSHFTKTTTG. Ser-460 is modified (phosphoserine). A Helicase ATP-binding domain is found at 583 to 786; the sequence is WRESQKPQGG…YSLLKFLRCS (204 aa). 596–603 provides a ligand contact to ATP; sequence DDMGLGKT. The DEAH box signature appears at 737–740; sequence DEAH. Residues 871 to 890 are disordered; sequence KRHESRGNQSGRSPNNPFSR. Over residues 877–888 the composition is skewed to polar residues; sequence GNQSGRSPNNPF. 2 positions are modified to phosphoserine: Ser-883 and Ser-908. The region spanning 995–1157 is the Helicase C-terminal domain; that stretch reads SLLAELEAIQ…VTKLTLADLR (163 aa).

This sequence belongs to the SNF2/RAD54 helicase family. Interacts with CDC5L. Part of the spliceosome.

Its subcellular location is the cytoplasm. The protein localises to the nucleus. Its function is as follows. DsDNA-dependent ATPase which acts as a transcription termination factor by coupling ATP hydrolysis with removal of RNA polymerase II from the DNA template. May contribute to mitotic transcription repression. May also be involved in pre-mRNA splicing. This Homo sapiens (Human) protein is Transcription termination factor 2 (TTF2).